The primary structure comprises 386 residues: O-methyltransferase aunE (386 aa).

Residue Trp-200 coordinates S-adenosyl-L-methionine. Residue His-299 is the Proton acceptor of the active site.

The protein belongs to the class I-like SAM-binding methyltransferase superfamily. Cation-independent O-methyltransferase family.

The protein operates within secondary metabolite biosynthesis. Functionally, O-methyltransferase; part of the gene cluster that mediates the biosynthesis of aurasperone B, a dimeric gamma-naphthopyrone. The first step in the biosynthesis of aurasperone B is the production of gamma-naphthopyrone precursor YWA1 by the non-reducing polyketide synthase albA, via condensation of one acetyl-CoA starter unit with 6 malonyl-CoA units. YWA1 is then methylated by aunE at position C-6 to yield foncesin which is further methylated at position C-8 by aunD to produce fonsecin B. A key enzyme in the biosynthetic pathway is the cytochrome P450 monooxygenase aunB which catalyzes the oxidative dimerization of fonsecin B to aurasperone B. AunB also catalyzes the oxidative dimerization of rubrofusarin B into aurasperone A. The chain is O-methyltransferase aunE from Aspergillus niger (strain ATCC MYA-4892 / CBS 513.88 / FGSC A1513).